A 360-amino-acid polypeptide reads, in one-letter code: 3-isopropylmalate dehydrogenase (360 aa).

76-89 (GPKWDKLDMAIRPE) is an NAD(+) binding site. Substrate contacts are provided by Arg96, Arg106, Arg134, and Asp224. 3 residues coordinate Mg(2+): Asp224, Asp248, and Asp252. Residue 282-294 (GSAPDIAGQNMAN) coordinates NAD(+).

It belongs to the isocitrate and isopropylmalate dehydrogenases family. LeuB type 1 subfamily. In terms of assembly, homodimer. Requires Mg(2+) as cofactor. The cofactor is Mn(2+).

It is found in the cytoplasm. The enzyme catalyses (2R,3S)-3-isopropylmalate + NAD(+) = 4-methyl-2-oxopentanoate + CO2 + NADH. It participates in amino-acid biosynthesis; L-leucine biosynthesis; L-leucine from 3-methyl-2-oxobutanoate: step 3/4. Its function is as follows. Catalyzes the oxidation of 3-carboxy-2-hydroxy-4-methylpentanoate (3-isopropylmalate) to 3-carboxy-4-methyl-2-oxopentanoate. The product decarboxylates to 4-methyl-2 oxopentanoate. The chain is 3-isopropylmalate dehydrogenase from Hahella chejuensis (strain KCTC 2396).